The primary structure comprises 200 residues: Claudin-11 (200 aa).

Residue Met1 is a topological domain, cytoplasmic. The helical transmembrane segment at 2–22 threads the bilayer; the sequence is VATCLQVVGFVTSFVGWIGVI. Residues 23-75 lie on the Extracellular side of the membrane; it reads VTTSTNDWVVTCGYTIPTCRKLDELGSKGLWADCVMATGLYHCKPLVDILPCR. A helical transmembrane segment spans residues 76–96; it reads ALMIAASVLGLPAILLLLTVL. The Cytoplasmic portion of the chain corresponds to 97–115; the sequence is PCIRMGQEPGVAKYRRAQL. The helical transmembrane segment at 116–136 threads the bilayer; the sequence is AGVLLILLALCAIVATIWFPV. Residues 137–150 are Extracellular-facing; it reads CAHRETTIVSFGYS. The chain crosses the membrane as a helical span at residues 151 to 171; it reads LYAGWIGAVLCLVGGCVILCC. The Cytoplasmic portion of the chain corresponds to 172-200; that stretch reads AGDAQAFGENRFYYTAGSSSPTHAKSAHV. Phosphoserine occurs at positions 190 and 191.

This sequence belongs to the claudin family. In terms of assembly, interacts with tetraspanin-3/TSPAN3. Interacts with OCLN.

It localises to the cell junction. Its subcellular location is the tight junction. It is found in the cell membrane. Plays a major role in tight junction-specific obliteration of the intercellular space, through calcium-independent cell-adhesion activity. In Pongo abelii (Sumatran orangutan), this protein is Claudin-11 (CLDN11).